The chain runs to 689 residues: Glycine--tRNA ligase beta subunit (689 aa).

This sequence belongs to the class-II aminoacyl-tRNA synthetase family. In terms of assembly, tetramer of two alpha and two beta subunits.

Its subcellular location is the cytoplasm. It catalyses the reaction tRNA(Gly) + glycine + ATP = glycyl-tRNA(Gly) + AMP + diphosphate. This is Glycine--tRNA ligase beta subunit from Salmonella typhi.